We begin with the raw amino-acid sequence, 89 residues long: Small ribosomal subunit protein uS15 (89 aa).

The disordered stretch occupies residues 1 to 23 (MTLNTEAKQKIINKHQTHGTDTG).

The protein belongs to the universal ribosomal protein uS15 family. As to quaternary structure, part of the 30S ribosomal subunit. Forms a bridge to the 50S subunit in the 70S ribosome, contacting the 23S rRNA.

Functionally, one of the primary rRNA binding proteins, it binds directly to 16S rRNA where it helps nucleate assembly of the platform of the 30S subunit by binding and bridging several RNA helices of the 16S rRNA. Forms an intersubunit bridge (bridge B4) with the 23S rRNA of the 50S subunit in the ribosome. The sequence is that of Small ribosomal subunit protein uS15 from Prochlorococcus marinus (strain SARG / CCMP1375 / SS120).